The sequence spans 1222 residues: Kinesin-related protein 9 (1222 aa).

Positions 1–25 are enriched in polar residues; the sequence is MDNNNNNFSTPKQPTINSTTGGQLR. 3 disordered regions span residues 1–55, 75–165, and 188–343; these read MDNN…ITNS, MDSL…STNI, and SSNT…TQPL. Over residues 26-55 the composition is skewed to low complexity; that stretch reads SRSNSSPSTSSISTPRNGSTTATTSSITNS. Residues 75–85 are compositionally biased toward polar residues; the sequence is MDSLSTPMSQS. 4 stretches are compositionally biased toward low complexity: residues 122–165, 194–209, 216–238, and 254–325; these read SFIS…STNI, SSLP…PLSN, NHHL…ISTT, and NLTT…RTPI. A compositionally biased stretch (polar residues) spans 326 to 343; sequence QNFNSVGGVNITSKTQPL. The Kinesin motor domain maps to 350-719; the sequence is SIQAVCRFRP…LNFGQRAQSV (370 aa). Position 438–445 (438–445) interacts with ATP; it reads GQTGAGKT. Residues 724–1026 are a coiled coil; sequence LQNVEESHSE…DTLTNKLEIQ (303 aa). The interval 1144–1174 is disordered; that stretch reads NINNNNNIKNNNNNNKLKSKKVGSSSSSSSN. The helical transmembrane segment at 1183–1203 threads the bilayer; the sequence is ILFFLIILVILFFLMVAVGLT.

It belongs to the TRAFAC class myosin-kinesin ATPase superfamily. Kinesin family.

It localises to the membrane. It is found in the cytoplasm. The protein localises to the cytoskeleton. Microtubule-associated force-producing protein that plays a role in organelle transport. Its motor activity is directed toward the microtubule's plus end. The sequence is that of Kinesin-related protein 9 (kif9) from Dictyostelium discoideum (Social amoeba).